Here is a 336-residue protein sequence, read N- to C-terminus: Tetraacyldisaccharide 4'-kinase (336 aa).

60-67 (TVGGTGKT) is an ATP binding site.

The protein belongs to the LpxK family.

The enzyme catalyses a lipid A disaccharide + ATP = a lipid IVA + ADP + H(+). It participates in glycolipid biosynthesis; lipid IV(A) biosynthesis; lipid IV(A) from (3R)-3-hydroxytetradecanoyl-[acyl-carrier-protein] and UDP-N-acetyl-alpha-D-glucosamine: step 6/6. In terms of biological role, transfers the gamma-phosphate of ATP to the 4'-position of a tetraacyldisaccharide 1-phosphate intermediate (termed DS-1-P) to form tetraacyldisaccharide 1,4'-bis-phosphate (lipid IVA). The sequence is that of Tetraacyldisaccharide 4'-kinase from Pseudomonas fluorescens (strain Pf0-1).